Consider the following 124-residue polypeptide: Small ribosomal subunit protein uS12 (124 aa).

3-methylthioaspartic acid is present on Asp-89. A disordered region spans residues 105–124 (AGVKDRKKGRSKYGAKRPKA). The segment covering 109-124 (DRKKGRSKYGAKRPKA) has biased composition (basic residues).

The protein belongs to the universal ribosomal protein uS12 family. As to quaternary structure, part of the 30S ribosomal subunit. Contacts proteins S8 and S17. May interact with IF1 in the 30S initiation complex.

With S4 and S5 plays an important role in translational accuracy. Its function is as follows. Interacts with and stabilizes bases of the 16S rRNA that are involved in tRNA selection in the A site and with the mRNA backbone. Located at the interface of the 30S and 50S subunits, it traverses the body of the 30S subunit contacting proteins on the other side and probably holding the rRNA structure together. The combined cluster of proteins S8, S12 and S17 appears to hold together the shoulder and platform of the 30S subunit. The chain is Small ribosomal subunit protein uS12 from Dichelobacter nodosus (strain VCS1703A).